Here is a 202-residue protein sequence, read N- to C-terminus: Hydrogenase expression/formation protein HoxM (202 aa).

Glu-15, Asp-61, and His-92 together coordinate Ni(2+).

This sequence belongs to the peptidase A31 family.

Absolutely required for hydrogenase activity. Mediates the attachment of hydrogenase to the bacterial membrane; attachment is a requirement for enzymatic activity. The sequence is that of Hydrogenase expression/formation protein HoxM (hoxM) from Cupriavidus necator (strain ATCC 17699 / DSM 428 / KCTC 22496 / NCIMB 10442 / H16 / Stanier 337) (Ralstonia eutropha).